Reading from the N-terminus, the 3388-residue chain is Genome polyprotein (3388 aa).

Residues 1-15 (MNDQRKKARNTPFNM) form an interaction with host EXOC1 region. Topologically, residues 1–101 (MNDQRKKARN…LNILNRRRRT (101 aa)) are cytoplasmic. The interval 37–72 (MLQGRGPLKLFMALVAFLRFLTIPPTAGILKRWGTI) is hydrophobic; homodimerization of capsid protein C. Residues 101–114 (TAGMIIMLIPTVMA) constitute a propeptide, ER anchor for the capsid protein C, removed in mature form by serine protease NS3. Residues 102-122 (AGMIIMLIPTVMAFHLTTRNG) form a helical membrane-spanning segment. Residues 123–238 (EPHMIVSRQE…GAWKHAQRIE (116 aa)) lie on the Extracellular side of the membrane. Asn183 carries N-linked (GlcNAc...) asparagine; by host glycosylation. Residues 239–259 (TWILRHPGFTIMAAILAYTIG) form a helical membrane-spanning segment. Topologically, residues 260–265 (TTHFQR) are cytoplasmic. A helical membrane pass occupies residues 266–280 (VLIFILLTAIAPSMT). Residues 281–725 (MRCIGISNRD…LHQVFGAIYG (445 aa)) lie on the Extracellular side of the membrane. 4 disulfides stabilise this stretch: Cys283–Cys310, Cys340–Cys401, Cys354–Cys385, and Cys372–Cys396. Asn347 carries N-linked (GlcNAc...) asparagine; by host glycosylation. Residues 378–391 (DRGWGNGCGLFGKG) form a fusion peptide region. N-linked (GlcNAc...) asparagine; by host glycosylation occurs at Asn433. Intrachain disulfides connect Cys465-Cys565 and Cys582-Cys613. Residues 726–746 (AAFSGVSWTMKILIGVIITWI) traverse the membrane as a helical segment. At 747–752 (GMNSRS) the chain is on the cytoplasmic side. Residues 753-773 (TSLSVSLVLVGIVTLYLGVMV) traverse the membrane as a helical segment. Over 774 to 1195 (QADSGCVVSW…MVGATMTDDI (422 aa)) the chain is Extracellular. 6 disulfide bridges follow: Cys779/Cys790, Cys830/Cys918, Cys954/Cys998, Cys1055/Cys1104, Cys1066/Cys1088, and Cys1087/Cys1091. 2 N-linked (GlcNAc...) asparagine; by host glycosylation sites follow: Asn905 and Asn982. An N-linked (GlcNAc...) asparagine; by host glycan is attached at Asn1134. Residues 1196–1220 (GMGVTYLALLAAFKVRPTFAAGLLL) form a helical membrane-spanning segment. Over 1221–1226 (RKLTSK) the chain is Cytoplasmic. The chain crosses the membrane as a helical span at residues 1227 to 1245 (ELMMTTIGIVLLSQSSIPE). At 1246–1269 (TILELTDALALGMMVLKMVRNMEK) the chain is on the lumenal side. A helical transmembrane segment spans residues 1270 to 1290 (YQLAVTIMAILCVPNAVILQN). Ala1291 is a topological domain (cytoplasmic). A helical transmembrane segment spans residues 1292–1310 (WKVSCTILAVVSVSPLFLT). Residues 1311 to 1317 (SSQQKAD) lie on the Lumenal side of the membrane. The helical transmembrane segment at 1318–1338 (WIPLALTIKGLNPTAIFLTTL) threads the bilayer. At 1339–1346 (SRTSKKRS) the chain is on the cytoplasmic side. Residues 1347-1367 (WPLNEAIMAVGMVSILASSLL) traverse the membrane as a helical segment. Topologically, residues 1368–1370 (KND) are lumenal. A helical membrane pass occupies residues 1371–1391 (TPMTGPLVAGGLLTVCYVLTG). Topologically, residues 1392 to 1447 (RSADLELERATDVKWDDQAEISGSSPILSITISEDGSMSIKNEEEEQTLTILIRTG) are cytoplasmic. Positions 1398-1437 (LERATDVKWDDQAEISGSSPILSITISEDGSMSIKNEEEE) are interacts with and activates NS3 protease. Residues 1448 to 1468 (LLVISGLFPVSIPITAAAWYL) constitute an intramembrane region (helical). The Cytoplasmic portion of the chain corresponds to 1469 to 2144 (WEVKKQRAGV…LSELPETLET (676 aa)). A Peptidase S7 domain is found at 1476-1653 (AGVLWDVPSP…EKSIEDNPEI (178 aa)). Catalysis depends on charge relay system; for serine protease NS3 activity residues His1526, Asp1550, and Ser1610. The 157-residue stretch at 1655 to 1811 (DDIFRKRRLT…QSNAPIMDEE (157 aa)) folds into the Helicase ATP-binding domain. The segment at 1659-1662 (RKRR) is important for RNA-binding. An ATP-binding site is contributed by 1668–1675 (LHPGAGKT). Residues 1759-1762 (DEAH) carry the DEAH box motif. In terms of domain architecture, Helicase C-terminal spans 1821-1988 (SGHEWVTDFK…IIPSMFEPER (168 aa)). Lys1863 carries the post-translational modification N6-acetyllysine; by host. The helical transmembrane segment at 2145 to 2165 (LLLLTLLATVTGGIFLFLMSG) threads the bilayer. Residues 2166–2167 (RG) lie on the Lumenal side of the membrane. Residues 2168-2188 (IGKMTLGMCCIITASILLWYA) constitute an intramembrane region (helical). Residue Gln2189 is a topological domain, lumenal. Residues 2190 to 2210 (IQPHWIAASIILEFFLIVLLI) traverse the membrane as a helical segment. Residues 2211–2225 (PEPEKQRTPQDNQLT) are Cytoplasmic-facing. Residues 2226–2246 (YVIIAILTVVAATMANEMGFL) traverse the membrane as a helical segment. Residues 2247-2271 (EKTKKDLGLGNIATQQPESNILDID) lie on the Lumenal side of the membrane. An intramembrane region (helical) is located at residues 2272–2292 (LRPASAWTLYAVATTFITPML). Residues 2293–2313 (RHSIENSSVNVSLTAIANQAT) are Lumenal-facing. N-linked (GlcNAc...) asparagine; by host glycosylation is found at Asn2298 and Asn2302. The helical intramembrane region spans 2314–2334 (VLMGLGKGWPLSKMDIGVPLL). The Lumenal segment spans residues 2335–2344 (AIGCYSQVNP). The helical transmembrane segment at 2345–2365 (ITLTAALLLLVAHYAIIGPGL) threads the bilayer. Over 2366-2410 (QAKATREAQKRAAAGIMKNPTVDGITVIDLDPIPYDPKFEKQLGQ) the chain is Cytoplasmic. The helical transmembrane segment at 2411–2431 (VMLLVLCVTQVLMMRTTWALC) threads the bilayer. Residues 2432–2456 (EALTLATGPVSTLWEGNPGRFWNTT) are Lumenal-facing. An N-linked (GlcNAc...) asparagine; by host glycan is attached at Asn2454. The helical transmembrane segment at 2457-2477 (IAVSMANIFRGSYLAGAGLLF) threads the bilayer. The Cytoplasmic portion of the chain corresponds to 2478 to 3388 (SIMKNTTSTR…REEEEAGVLW (911 aa)). In terms of domain architecture, mRNA cap 0-1 NS5-type MT spans 2490–2752 (TGNIGETLGE…DVDLGSGTRN (263 aa)). Ser2544 lines the S-adenosyl-L-methionine pocket. The residue at position 2544 (Ser2544) is a Phosphoserine. Residue Lys2549 is the For 2'-O-MTase activity of the active site. Positions 2565–2568 (VVDL) match the SUMO-interacting motif motif. Gly2574, Trp2575, Thr2592, Lys2593, Asp2619, and Val2620 together coordinate S-adenosyl-L-methionine. Asp2634 (for 2'-O-MTase activity) is an active-site residue. Ile2635 lines the S-adenosyl-L-methionine pocket. Residues Lys2669 and Glu2705 each act as for 2'-O-MTase activity in the active site. Tyr2707 serves as a coordination point for S-adenosyl-L-methionine. Zn(2+)-binding residues include Glu2926, His2930, Cys2935, and Cys2938. The 150-residue stretch at 3017–3166 (AMYADDTAGW…PLDDRFARAL (150 aa)) folds into the RdRp catalytic domain. Residues His3200, Cys3216, and Cys3335 each contribute to the Zn(2+) site.

In the N-terminal section; belongs to the class I-like SAM-binding methyltransferase superfamily. mRNA cap 0-1 NS5-type methyltransferase family. Homodimer. Interacts (via N-terminus) with host EXOC1 (via C-terminus); this interaction results in EXOC1 degradation through the proteasome degradation pathway. As to quaternary structure, forms heterodimers with envelope protein E in the endoplasmic reticulum and Golgi. In terms of assembly, homodimer; in the endoplasmic reticulum and Golgi. Interacts with protein prM. Interacts with non-structural protein 1. Homodimer; Homohexamer when secreted. Interacts with envelope protein E. Interacts with host PRKAA1. As to quaternary structure, interacts (via N-terminus) with serine protease NS3. In terms of assembly, forms a heterodimer with serine protease NS3. May form homooligomers. Forms a heterodimer with NS2B. Interacts with NS4B. Interacts with unphosphorylated RNA-directed RNA polymerase NS5; this interaction stimulates RNA-directed RNA polymerase NS5 guanylyltransferase activity. Interacts with host SHFL. As to quaternary structure, interacts with host MAVS; this interaction inhibits the synthesis of IFN-beta. Interacts with host SHFL. Interacts with host AUP1; the interaction occurs in the presence of Dengue virus NS4B and induces lipophagy which facilitates production of virus progeny particles. May interact with host SRPRA and SEC61G. In terms of assembly, interacts with serine protease NS3. Homodimer. Interacts with host STAT2; this interaction inhibits the phosphorylation of the latter, and, when all viral proteins are present (polyprotein), targets STAT2 for degradation. Interacts with serine protease NS3. Interacts with host PAF1 complex; the interaction may prevent the recruitment of the PAF1 complex to interferon-responsive genes, and thus reduces the immune response. Post-translationally, specific enzymatic cleavages in vivo yield mature proteins. Cleavages in the lumen of endoplasmic reticulum are performed by host signal peptidase, whereas cleavages in the cytoplasmic side are performed by serine protease NS3. Signal cleavage at the 2K-4B site requires a prior NS3 protease-mediated cleavage at the 4A-2K site. In terms of processing, cleaved in post-Golgi vesicles by a host furin, releasing the mature small envelope protein M, and peptide pr. This cleavage is incomplete as up to 30% of viral particles still carry uncleaved prM. N-glycosylated. Post-translationally, N-glycosylated. The excreted form is glycosylated and this is required for efficient secretion of the protein from infected cells. In terms of processing, acetylated by host KAT5. Acetylation modulates NS3 RNA-binding and unwinding activities and plays an important positive role for viral replication. Sumoylation of RNA-directed RNA polymerase NS5 increases NS5 protein stability allowing proper viral RNA replication. Post-translationally, phosphorylated on serines residues. This phosphorylation may trigger NS5 nuclear localization.

It is found in the virion. The protein resides in the host nucleus. The protein localises to the host cytoplasm. It localises to the host perinuclear region. Its subcellular location is the secreted. It is found in the virion membrane. The protein resides in the host endoplasmic reticulum membrane. The protein localises to the host mitochondrion. The catalysed reaction is Selective hydrolysis of -Xaa-Xaa-|-Yaa- bonds in which each of the Xaa can be either Arg or Lys and Yaa can be either Ser or Ala.. The enzyme catalyses RNA(n) + a ribonucleoside 5'-triphosphate = RNA(n+1) + diphosphate. It catalyses the reaction a ribonucleoside 5'-triphosphate + H2O = a ribonucleoside 5'-diphosphate + phosphate + H(+). It carries out the reaction ATP + H2O = ADP + phosphate + H(+). The catalysed reaction is a 5'-end (5'-triphosphoguanosine)-ribonucleoside in mRNA + S-adenosyl-L-methionine = a 5'-end (N(7)-methyl 5'-triphosphoguanosine)-ribonucleoside in mRNA + S-adenosyl-L-homocysteine. The enzyme catalyses a 5'-end (N(7)-methyl 5'-triphosphoguanosine)-ribonucleoside in mRNA + S-adenosyl-L-methionine = a 5'-end (N(7)-methyl 5'-triphosphoguanosine)-(2'-O-methyl-ribonucleoside) in mRNA + S-adenosyl-L-homocysteine + H(+). Plays a role in virus budding by binding to the cell membrane and gathering the viral RNA into a nucleocapsid that forms the core of a mature virus particle. During virus entry, may induce genome penetration into the host cytoplasm after hemifusion induced by the surface proteins. Can migrate to the cell nucleus where it modulates host functions. Overcomes the anti-viral effects of host EXOC1 by sequestering and degrading the latter through the proteasome degradation pathway. In terms of biological role, inhibits RNA silencing by interfering with host Dicer. Functionally, prevents premature fusion activity of envelope proteins in trans-Golgi by binding to envelope protein E at pH6.0. After virion release in extracellular space, gets dissociated from E dimers. Its function is as follows. Acts as a chaperone for envelope protein E during intracellular virion assembly by masking and inactivating envelope protein E fusion peptide. prM is the only viral peptide matured by host furin in the trans-Golgi network probably to avoid catastrophic activation of the viral fusion activity in acidic Golgi compartment prior to virion release. prM-E cleavage is inefficient, and many virions are only partially matured. These uncleaved prM would play a role in immune evasion. May play a role in virus budding. Exerts cytotoxic effects by activating a mitochondrial apoptotic pathway through M ectodomain. May display a viroporin activity. In terms of biological role, binds to host cell surface receptor and mediates fusion between viral and cellular membranes. Envelope protein is synthesized in the endoplasmic reticulum in the form of heterodimer with protein prM. They play a role in virion budding in the ER, and the newly formed immature particle is covered with 60 spikes composed of heterodimer between precursor prM and envelope protein E. The virion is transported to the Golgi apparatus where the low pH causes dissociation of PrM-E heterodimers and formation of E homodimers. prM-E cleavage is inefficient, and many virions are only partially matured. These uncleaved prM would play a role in immune evasion. Functionally, involved in immune evasion, pathogenesis and viral replication. Once cleaved off the polyprotein, is targeted to three destinations: the viral replication cycle, the plasma membrane and the extracellular compartment. Essential for viral replication. Required for formation of the replication complex and recruitment of other non-structural proteins to the ER-derived membrane structures. Excreted as a hexameric lipoparticle that plays a role against host immune response. Antagonizing the complement function. Binds to the host macrophages and dendritic cells. Inhibits signal transduction originating from Toll-like receptor 3 (TLR3). Mediates complement activation, which may contribute to the pathogenesis of the vascular leakage that occurs in severe dengue disease. Activates autophagy through the AMPK/ERK/mTOR signaling pathway. Mechanistically, acts as the assembly platform for STK11-AMPK interactions and promotes STK11-AMPK interactions. In turn, promotes phosphorylation of the AMPK kinase structural domain and activates AMPK, thereby positively regulating the AMPK/ERK/mTOR signaling pathway and inducing autophagy. Its function is as follows. Disrupts the host endothelial glycocalyx layer of host pulmonary microvascular endothelial cells, inducing degradation of sialic acid and shedding of heparan sulfate proteoglycans. NS1 induces expression of sialidases, heparanase, and activates cathepsin L, which activates heparanase via enzymatic cleavage. These effects are probably linked to the endothelial hyperpermeability observed in severe dengue disease. Component of the viral RNA replication complex that functions in virion assembly and antagonizes the host immune response. In terms of biological role, required cofactor for the serine protease function of NS3. May have membrane-destabilizing activity and form viroporins. Functionally, displays three enzymatic activities: serine protease, NTPase and RNA helicase. NS3 serine protease, in association with NS2B, performs its autocleavage and cleaves the polyprotein at dibasic sites in the cytoplasm: C-prM, NS2A-NS2B, NS2B-NS3, NS3-NS4A, NS4A-2K and NS4B-NS5. NS3 RNA helicase binds RNA and unwinds dsRNA in the 3' to 5' direction. Its function is as follows. Regulates the ATPase activity of the NS3 helicase activity. NS4A allows NS3 helicase to conserve energy during unwinding. Plays a role in the inhibition of the host innate immune response. Interacts with host MAVS and thereby prevents the interaction between RIGI and MAVS. In turn, IFN-beta production is impaired. Interacts with host AUP1 which mediates induction of lipophagy in host cells and facilitates production of virus progeny particles. Functions as a signal peptide for NS4B and is required for the interferon antagonism activity of the latter. In terms of biological role, induces the formation of ER-derived membrane vesicles where the viral replication takes place. Inhibits interferon (IFN)-induced host STAT1 phosphorylation and nuclear translocation, thereby preventing the establishment of cellular antiviral state by blocking the IFN-alpha/beta pathway. Functionally, replicates the viral (+) and (-) RNA genome, and performs the capping of genomes in the cytoplasm. NS5 methylates viral RNA cap at guanine N-7 and ribose 2'-O positions. Besides its role in RNA genome replication, also prevents the establishment of cellular antiviral state by blocking the interferon-alpha/beta (IFN-alpha/beta) signaling pathway. Inhibits host TYK2 and STAT2 phosphorylation, thereby preventing activation of JAK-STAT signaling pathway. May reduce immune responses by preventing the recruitment of the host PAF1 complex to interferon-responsive genes. This is Genome polyprotein from Aedimorphus (Red guenon).